The following is a 226-amino-acid chain: Enolase-phosphatase E1 (226 aa).

This sequence belongs to the HAD-like hydrolase superfamily. MasA/MtnC family. As to quaternary structure, monomer. It depends on Mg(2+) as a cofactor.

It carries out the reaction 5-methylsulfanyl-2,3-dioxopentyl phosphate + H2O = 1,2-dihydroxy-5-(methylsulfanyl)pent-1-en-3-one + phosphate. It participates in amino-acid biosynthesis; L-methionine biosynthesis via salvage pathway; L-methionine from S-methyl-5-thio-alpha-D-ribose 1-phosphate: step 3/6. Its pathway is amino-acid biosynthesis; L-methionine biosynthesis via salvage pathway; L-methionine from S-methyl-5-thio-alpha-D-ribose 1-phosphate: step 4/6. Its function is as follows. Bifunctional enzyme that catalyzes the enolization of 2,3-diketo-5-methylthiopentyl-1-phosphate (DK-MTP-1-P) into the intermediate 2-hydroxy-3-keto-5-methylthiopentenyl-1-phosphate (HK-MTPenyl-1-P), which is then dephosphorylated to form the acireductone 1,2-dihydroxy-3-keto-5-methylthiopentene (DHK-MTPene). The polypeptide is Enolase-phosphatase E1 (Shewanella sp. (strain W3-18-1)).